Consider the following 126-residue polypeptide: Probable 4-amino-4-deoxy-L-arabinose-phosphoundecaprenol flippase subunit ArnF (126 aa).

A helical membrane pass occupies residues 1–21 (MGFFWALLSVGLVSAAQLLLR). Residues 22-47 (SAMVALPPLTDIVAFLQHLLHFQPGT) lie on the Periplasmic side of the membrane. A helical transmembrane segment spans residues 48-68 (FGLFFGLLGYLLSMVCWYFAL). The Cytoplasmic portion of the chain corresponds to 69-76 (HRLPLSKA). Residues 77-97 (YALLSLSYILVWAAAIWLPGW) form a helical membrane-spanning segment. The Periplasmic portion of the chain corresponds to 98–100 (HEP). The helical transmembrane segment at 101–121 (FYWQSLLGVAIIVAGVLTIFW) threads the bilayer. Residues 122–126 (PVKRR) lie on the Cytoplasmic side of the membrane.

Belongs to the ArnF family. In terms of assembly, heterodimer of ArnE and ArnF.

It localises to the cell inner membrane. It functions in the pathway bacterial outer membrane biogenesis; lipopolysaccharide biosynthesis. Translocates 4-amino-4-deoxy-L-arabinose-phosphoundecaprenol (alpha-L-Ara4N-phosphoundecaprenol) from the cytoplasmic to the periplasmic side of the inner membrane. The sequence is that of Probable 4-amino-4-deoxy-L-arabinose-phosphoundecaprenol flippase subunit ArnF from Klebsiella pneumoniae subsp. pneumoniae (strain ATCC 700721 / MGH 78578).